Reading from the N-terminus, the 298-residue chain is uncharacterized protein (298 aa).

Catalysis depends on charge relay system residues threonine 43 and tyrosine 105. Tyrosine 131 (proton donor) is an active-site residue. Catalysis depends on lysine 159, which acts as the Schiff-base intermediate with substrate.

It belongs to the DapA family. As to quaternary structure, homotetramer.

It localises to the cytoplasm. This is an uncharacterized protein from Pyrococcus furiosus (strain ATCC 43587 / DSM 3638 / JCM 8422 / Vc1).